The chain runs to 84 residues: MAEDPQDIADRERIFKRFDLNGDGKISSAELGETLKMLGSVTSEEVQHMMAELDTDGDGFISYEEFEEFARANRGLIKDVAKVF.

EF-hand domains lie at 6-40 (QDIA…MLGS) and 41-76 (VTSE…NRGL). Positions 19, 21, 23, 25, 30, 54, 56, 58, and 65 each coordinate Ca(2+).

This is Polcalcin Nic t 1 (Nict1) from Nicotiana tabacum (Common tobacco).